A 349-amino-acid chain; its full sequence is Peroxidase 22 (349 aa).

The N-terminal stretch at 1-29 is a signal peptide; the sequence is MGFSPSFSCSAIGALILGCLLLQASNSNA. Residue Gln-30 is modified to Pyrrolidone carboxylic acid. 4 disulfides stabilise this stretch: Cys-40–Cys-120, Cys-73–Cys-78, Cys-126–Cys-329, and Cys-206–Cys-238. Residue His-71 is the Proton acceptor of the active site. Positions 72, 75, 77, 79, and 81 each coordinate Ca(2+). The N-linked (GlcNAc...) asparagine glycan is linked to Asn-86. Pro-168 contacts substrate. Residues Asn-173 and Asn-187 are each glycosylated (N-linked (GlcNAc...) asparagine). His-199 is a binding site for heme b. Ca(2+) is bound at residue Thr-200. 2 N-linked (GlcNAc...) asparagine glycosylation sites follow: Asn-217 and Asn-243. Positions 251, 254, and 259 each coordinate Ca(2+).

This sequence belongs to the peroxidase family. Classical plant (class III) peroxidase subfamily. Heme b serves as cofactor. It depends on Ca(2+) as a cofactor. Mainly expressed in roots.

It is found in the secreted. The protein resides in the vacuole. The enzyme catalyses 2 a phenolic donor + H2O2 = 2 a phenolic radical donor + 2 H2O. Its function is as follows. Removal of H(2)O(2), oxidation of toxic reductants, biosynthesis and degradation of lignin, suberization, auxin catabolism, response to environmental stresses such as wounding, pathogen attack and oxidative stress. These functions might be dependent on each isozyme/isoform in each plant tissue. The sequence is that of Peroxidase 22 (PER22) from Arabidopsis thaliana (Mouse-ear cress).